The following is a 344-amino-acid chain: GDSL esterase/lipase At1g73610 (344 aa).

A signal peptide spans 1–24 (MNCLMFFKMLLAFSFISLFYVGNA). An N-linked (GlcNAc...) asparagine glycan is attached at asparagine 30. The active-site Nucleophile is the serine 42. Residues aspartate 319 and histidine 322 contribute to the active site.

It belongs to the 'GDSL' lipolytic enzyme family.

The protein localises to the secreted. The polypeptide is GDSL esterase/lipase At1g73610 (Arabidopsis thaliana (Mouse-ear cress)).